Reading from the N-terminus, the 156-residue chain is dCTP deaminase (156 aa).

DCTP-binding positions include 79-84 (RSTFAR), aspartate 95, glutamine 124, and tyrosine 138.

This sequence belongs to the dCTP deaminase family. In terms of assembly, homotrimer.

It catalyses the reaction dCTP + H2O + H(+) = dUTP + NH4(+). It participates in pyrimidine metabolism; dUMP biosynthesis; dUMP from dCTP (dUTP route): step 1/2. Catalyzes the deamination of dCTP to dUTP. The polypeptide is dCTP deaminase (Thermococcus sibiricus (strain DSM 12597 / MM 739)).